A 489-amino-acid polypeptide reads, in one-letter code: Beta-galactosidase (489 aa).

Lys-116 is modified (N6-methyllysine; partial). Lys-135 carries the N6-methyllysine modification. Glu-206 acts as the Proton donor in catalysis. 2 positions are modified to N6-methyllysine; partial: Lys-273 and Lys-311. An N6-methyllysine modification is found at Lys-332. Catalysis depends on Glu-387, which acts as the Nucleophile.

As to quaternary structure, homotetramer.

The enzyme catalyses Hydrolysis of terminal non-reducing beta-D-galactose residues in beta-D-galactosides.. The polypeptide is Beta-galactosidase (lacS) (Saccharolobus solfataricus (strain ATCC 35092 / DSM 1617 / JCM 11322 / P2) (Sulfolobus solfataricus)).